The primary structure comprises 429 residues: MRAELNQGLIDFLKASPTPFHATASLARRLEAAGYRRLDERDAWHTETGGRYYVTRNDSSLIAIRLGRRSPLESGFRLVGAHTDSPCLRVKPNPEIARNGFLQLGVEVYGGALFAPWFDRDLSLAGRVTFRANGKLESRLVDFRKAIAVIPNLAIHLNRAANEGWPINAQNELPPIIAQLAPGEAADFRLLLDEQLLREHGITADVVLDYELSFYDTQSAAVVGLNDEFIAGARLDNLLSCHAGLEALLNAEGDENCILVCTDHEEVGSCSHCGADGPFLEQVLRRLLPEGDAFSRAIQRSLLVSADNAHGVHPNYADRHDANHGPALNGGPVIKINSNQRYATNSETAGFFRHLCQDSEVPVQSFVTRSDMGCGSTIGPITASQVGVRTVDIGLPTFAMHSIRELAGSHDLAHLVKVLGAFYASSELP.

Positions 82, 156, and 401 each coordinate Zn(2+).

It belongs to the peptidase M18 family. Zn(2+) serves as cofactor.

This Pseudomonas aeruginosa (strain LESB58) protein is Probable M18 family aminopeptidase 2.